A 519-amino-acid polypeptide reads, in one-letter code: Maturase K (519 aa).

Belongs to the intron maturase 2 family. MatK subfamily.

Its subcellular location is the plastid. The protein localises to the chloroplast. Its function is as follows. Usually encoded in the trnK tRNA gene intron. Probably assists in splicing its own and other chloroplast group II introns. This Keteleeria davidiana (David's keteleeria) protein is Maturase K.